An 855-amino-acid chain; its full sequence is Suppressor of tumorigenicity 14 protein homolog (855 aa).

Residues 1–55 (MGSNRGRKAGGGSQDFGAGLKYNSRLENMNGFEEGVEFLPANNAKKVEKRGPRRW) lie on the Cytoplasmic side of the membrane. At serine 13 the chain carries Phosphoserine. A helical; Signal-anchor for type II membrane protein membrane pass occupies residues 56–76 (VVLVAVLFSFLLLSLMAGLLV). At 77-855 (WHFHYRNVRV…RDWIKEHTGV (779 aa)) the chain is on the extracellular side. An SEA domain is found at 86-203 (VQKVFNGHLR…TSVVAFPIDP (118 aa)). N-linked (GlcNAc...) asparagine glycosylation occurs at asparagine 107. Cysteines 214 and 244 form a disulfide. 2 consecutive CUB domains span residues 214–331 (CSFA…EATF) and 340–444 (CGGF…LAEY). Asparagine 302 and asparagine 365 each carry an N-linked (GlcNAc...) asparagine glycan. 2 disulfides stabilise this stretch: cysteine 340-cysteine 366 and cysteine 397-cysteine 410. A glycan (N-linked (GlcNAc...) asparagine) is linked at asparagine 421. LDL-receptor class A domains follow at residues 451–488 (DPCPGMFMCKTGRCIRKELRCDGWADCPDYSDERYCRC), 489–522 (NATHQFTCKNQFCKPLFWVCDSVNDCGDGSDEEG), 523–561 (CSCPAGSFKCSNGKCLPQSQKCNGKDNCGDGSDEASCDS), and 565–604 (VSCTKYTYRCQNGLCLSKGNPECDGKTDCSDGSDEKNCDC). 13 disulfides stabilise this stretch: cysteine 453-cysteine 464, cysteine 459-cysteine 477, cysteine 471-cysteine 486, cysteine 488-cysteine 501, cysteine 496-cysteine 514, cysteine 508-cysteine 523, cysteine 525-cysteine 537, cysteine 532-cysteine 550, cysteine 544-cysteine 559, cysteine 567-cysteine 579, cysteine 574-cysteine 593, cysteine 587-cysteine 602, and cysteine 641-cysteine 657. Asparagine 489 carries N-linked (GlcNAc...) asparagine glycosylation. In terms of domain architecture, Peptidase S1 spans 615 to 854 (VVGGTNADEG…VRDWIKEHTG (240 aa)). Catalysis depends on charge relay system residues histidine 656 and aspartate 711. N-linked (GlcNAc...) asparagine glycosylation is present at asparagine 772. 2 disulfide bridges follow: cysteine 776–cysteine 790 and cysteine 801–cysteine 830. The active-site Charge relay system is serine 805.

Belongs to the peptidase S1 family. In terms of assembly, interacts with CDCP1. May interact with TMEFF1. As to expression, highly expressed in intestine, kidney, lung, and thymus. Not expressed in skeletal muscle, liver, heart, testis and brain.

It localises to the membrane. It catalyses the reaction Cleaves various synthetic substrates with Arg or Lys at the P1 position and prefers small side-chain amino acids, such as Ala and Gly, at the P2 position.. Its function is as follows. Exhibits trypsin-like activity as defined by cleavage of synthetic substrates with Arg or Lys as the P1 site. Involved in the terminal differentiation of keratinocytes through prostasin (PRSS8) activation and filaggrin (FLG) processing. Proteolytically cleaves and therefore activates TMPRSS13. This chain is Suppressor of tumorigenicity 14 protein homolog (St14), found in Mus musculus (Mouse).